Reading from the N-terminus, the 209-residue chain is Ribosomal RNA small subunit methyltransferase G (209 aa).

S-adenosyl-L-methionine contacts are provided by residues glycine 71, phenylalanine 76, 122 to 123 (AE), and arginine 135.

Belongs to the methyltransferase superfamily. RNA methyltransferase RsmG family.

Its subcellular location is the cytoplasm. Its function is as follows. Specifically methylates the N7 position of a guanine in 16S rRNA. The chain is Ribosomal RNA small subunit methyltransferase G from Flavobacterium psychrophilum (strain ATCC 49511 / DSM 21280 / CIP 103535 / JIP02/86).